The following is an 855-amino-acid chain: Alanine--tRNA ligase (855 aa).

The Zn(2+) site is built by His-555, His-559, Cys-657, and His-661.

This sequence belongs to the class-II aminoacyl-tRNA synthetase family. Zn(2+) serves as cofactor.

The protein resides in the cytoplasm. It carries out the reaction tRNA(Ala) + L-alanine + ATP = L-alanyl-tRNA(Ala) + AMP + diphosphate. Its function is as follows. Catalyzes the attachment of alanine to tRNA(Ala) in a two-step reaction: alanine is first activated by ATP to form Ala-AMP and then transferred to the acceptor end of tRNA(Ala). Also edits incorrectly charged Ser-tRNA(Ala) and Gly-tRNA(Ala) via its editing domain. The chain is Alanine--tRNA ligase from Wolinella succinogenes (strain ATCC 29543 / DSM 1740 / CCUG 13145 / JCM 31913 / LMG 7466 / NCTC 11488 / FDC 602W) (Vibrio succinogenes).